The primary structure comprises 171 residues: Large ribosomal subunit protein uL22 (171 aa).

It belongs to the universal ribosomal protein uL22 family.

The polypeptide is Large ribosomal subunit protein uL22 (RPL17) (Zea mays (Maize)).